The primary structure comprises 386 residues: MHVTAITMEDTSFPYRLGTECAEEIVARLGERAASRYLVVCDTTVAALYGRDLVARLEKDAGPAVLLTHPAGEVHKRIGTVGDLAEQALAAGADRRSVVVALGGGITGNIAGLLASLLFRGITLVHVPTTVVAMLDSVLSLKQAVNASFGKNLVGTFYQPAEVLADTAMLRTLPARELRSGMGEVVKNALAIRPSMIERLAAELRPDARYEDAAMRWIIEESVAAKAQVTGADKHERRDGLVLEYGHTTGHAIEHAARGEVAHGAGVAIGMIVAAEVSRLLGHASGDLVGLHRELVAKAGLEGSVPALVDPADVKHWLTYDNKRGYMPCPPAATPMVLLSAPGEVLRSGPLPLVPVPLELLGRAVDALAAPAGQSAGAERLSPAPA.

NAD(+) is bound by residues D42, 73 to 76 (EVHK), 105 to 109 (GITGN), 129 to 130 (TT), 140 to 142 (SLK), and 151 to 152 (KN). The active site involves K142. E184 contributes to the Co(2+) binding site. E244 is an active-site residue. Co(2+)-binding residues include H247 and H263.

The protein belongs to the sugar phosphate cyclases superfamily. DOI synthase family. It depends on NAD(+) as a cofactor. Co(2+) is required as a cofactor.

It carries out the reaction D-glucose 6-phosphate = 2-deoxy-L-scyllo-inosose + phosphate. Its pathway is metabolic intermediate biosynthesis; 2-deoxystreptamine biosynthesis; 2-deoxystreptamine from D-glucose 6-phosphate: step 1/4. It functions in the pathway antibiotic biosynthesis; paromomycin biosynthesis. Functionally, catalyzes the intramolecular carbocycle formation from D-glucose-6-phosphate to 2-deoxy-scyllo-inosose (DOI). The polypeptide is 2-deoxy-scyllo-inosose synthase (parC) (Streptomyces paromomycinus (Streptomyces rimosus subsp. paromomycinus)).